Consider the following 373-residue polypeptide: Opsin Rh1 (373 aa).

Topologically, residues 1–49 (MESFAVAAAQLGPHFAPLSNGSVVDKVTPDMAHLISPYWNQFPAMDPIW) are extracellular. An N-linked (GlcNAc...) asparagine glycan is attached at Asn-20. A helical transmembrane segment spans residues 50 to 74 (AKILTAYMIMIGMISWCGNGVVIYI). The Cytoplasmic portion of the chain corresponds to 75 to 86 (FATTKSLRTPAN). Residues 87–112 (LLVINLAISDFGIMITNTPMMGINLY) form a helical membrane-spanning segment. Over 113–126 (FETWVLGPMMCDIY) the chain is Extracellular. An intrachain disulfide couples Cys-123 to Cys-200. The helical transmembrane segment at 127 to 146 (AGLGSAFGCSSIWSMCMISL) threads the bilayer. Residues 147–165 (DRYQVIVKGMAGRPMTIPL) are Cytoplasmic-facing. The helical transmembrane segment at 166–189 (ALGKIAYIWFMSSIWCLAPAFGWS) threads the bilayer. The Extracellular segment spans residues 190–213 (RYVPEGNLTSCGIDYLERDWNPRS). N-linked (GlcNAc...) asparagine glycosylation occurs at Asn-196. A helical transmembrane segment spans residues 214-241 (YLIFYSIFVYYIPLFLICYSYWFIIAAV). The Cytoplasmic portion of the chain corresponds to 242–276 (SAHEKAMREQAKKMNVKSLRSSEDAEKSAEGKLAK). The chain crosses the membrane as a helical span at residues 277 to 300 (VALVTITLWFMAWTPYLVINCMGL). At 301-307 (FKFEGLT) the chain is on the extracellular side. The chain crosses the membrane as a helical span at residues 308 to 332 (PLNTIWGACFAKSAACYNPIVYGIS). Lys-319 bears the N6-(retinylidene)lysine mark. Residues 333–373 (HPKYRLALKEKCPCCVFGKVDDGKSSDAQSQATASEAESKA) lie on the Cytoplasmic side of the membrane. Residues 354 to 373 (DGKSSDAQSQATASEAESKA) are disordered. A compositionally biased stretch (low complexity) spans 358 to 373 (SDAQSQATASEAESKA).

The protein belongs to the G-protein coupled receptor 1 family. Opsin subfamily. In terms of processing, phosphorylated on some or all of the serine and threonine residues present in the C-terminal region.

The protein localises to the cell projection. It localises to the rhabdomere membrane. Visual pigments are the light-absorbing molecules that mediate vision. They consist of an apoprotein, opsin, covalently linked to cis-retinal. This chain is Opsin Rh1 (ninaE), found in Drosophila melanogaster (Fruit fly).